Reading from the N-terminus, the 397-residue chain is Golgi-associated RAB2 interactor protein 2 (397 aa).

Disordered regions lie at residues 1–24 and 342–397; these read MKKS…PDSK and QTTL…KLLN. Basic and acidic residues-rich tracts occupy residues 10–24, 353–369, and 376–397; these read TRID…PDSK, EKSK…RTMD, and KAEE…KLLN.

This sequence belongs to the GARIN family. In terms of assembly, interacts with CALM1.

It localises to the cell projection. It is found in the cilium. The protein resides in the flagellum. Its function is as follows. Seems to play a role in sperm motility. The protein is Golgi-associated RAB2 interactor protein 2 (GARIN2) of Bos taurus (Bovine).